Reading from the N-terminus, the 351-residue chain is S-adenosylmethionine:tRNA ribosyltransferase-isomerase (351 aa).

The protein belongs to the QueA family. In terms of assembly, monomer.

It localises to the cytoplasm. It carries out the reaction 7-aminomethyl-7-carbaguanosine(34) in tRNA + S-adenosyl-L-methionine = epoxyqueuosine(34) in tRNA + adenine + L-methionine + 2 H(+). The protein operates within tRNA modification; tRNA-queuosine biosynthesis. Its function is as follows. Transfers and isomerizes the ribose moiety from AdoMet to the 7-aminomethyl group of 7-deazaguanine (preQ1-tRNA) to give epoxyqueuosine (oQ-tRNA). This is S-adenosylmethionine:tRNA ribosyltransferase-isomerase from Phocaeicola vulgatus (strain ATCC 8482 / DSM 1447 / JCM 5826 / CCUG 4940 / NBRC 14291 / NCTC 11154) (Bacteroides vulgatus).